The chain runs to 432 residues: Adenylosuccinate synthetase (432 aa).

Residues 13–19 (GDEGKGK) and 41–43 (GHT) each bind GTP. Asp14 (proton acceptor) is an active-site residue. Positions 14 and 41 each coordinate Mg(2+). IMP is bound by residues 14–17 (DEGK), 39–42 (NAGH), Thr130, Arg144, Gln225, Thr240, and Arg304. His42 serves as the catalytic Proton donor. A substrate-binding site is contributed by 300 to 306 (ATTGRRR). Residues Arg306, 332 to 334 (KLD), and 415 to 417 (STG) contribute to the GTP site.

The protein belongs to the adenylosuccinate synthetase family. Homodimer. The cofactor is Mg(2+).

Its subcellular location is the cytoplasm. It catalyses the reaction IMP + L-aspartate + GTP = N(6)-(1,2-dicarboxyethyl)-AMP + GDP + phosphate + 2 H(+). It functions in the pathway purine metabolism; AMP biosynthesis via de novo pathway; AMP from IMP: step 1/2. Its function is as follows. Plays an important role in the de novo pathway of purine nucleotide biosynthesis. Catalyzes the first committed step in the biosynthesis of AMP from IMP. The sequence is that of Adenylosuccinate synthetase from Salmonella choleraesuis (strain SC-B67).